The primary structure comprises 207 residues: MANVTLFKQDGSQNGNVELNDSIWAIEPNENVVFDAIIMQRASLRQGTHAVKNRSAVRGGGRKPWRQKGTGRARQGSIRSPQWRGGGVVFGPTPRSYSYKLPRKVRRLAIKSVLSQKVIDNDLIVVDSFSFDAPKTKEFAEVLNKLDVNTKVLVVLEDGNDFTALSARNLPNVTVVPADGINVLDVVGNQKLILTQAALSKIEEVLA.

Residues 49–78 form a disordered region; it reads HAVKNRSAVRGGGRKPWRQKGTGRARQGSI. Positions 60-71 are enriched in basic residues; sequence GGRKPWRQKGTG.

Belongs to the universal ribosomal protein uL4 family. In terms of assembly, part of the 50S ribosomal subunit.

Its function is as follows. One of the primary rRNA binding proteins, this protein initially binds near the 5'-end of the 23S rRNA. It is important during the early stages of 50S assembly. It makes multiple contacts with different domains of the 23S rRNA in the assembled 50S subunit and ribosome. In terms of biological role, forms part of the polypeptide exit tunnel. The sequence is that of Large ribosomal subunit protein uL4 from Latilactobacillus sakei subsp. sakei (strain 23K) (Lactobacillus sakei subsp. sakei).